The chain runs to 348 residues: Ricin B-like lectin R40C1 (348 aa).

The segment at 1–26 (MFGFGHHGHHGQDQPPQHHGGGGGGA) is disordered. Positions 199–345 (TVRIFCKADE…CEGDNQRWKI (147 aa)) constitute a Ricin B-type lectin domain.

In terms of tissue distribution, expressed in roots and shoots.

Its function is as follows. Lectin which binds carbohydrates in vitro. Interacts through its lectin domain with glycan structures containing specific motifs. The chain is Ricin B-like lectin R40C1 from Oryza sativa subsp. japonica (Rice).